We begin with the raw amino-acid sequence, 497 residues long: MSSMPKQTDVILIGAGVMSATLGVLLKELAPDMKIKVFEKLASAGEESSNEWNNAGTGHAALCELNYTTENADGTIDISKAVKVNEQFQLSRQFWSHLVKEQVLPNPKEFIMPIPHMSMVEGAENVTFLKKRLEALSANPLFKGMEFSEDPEQLKEWIPLIMEGRTSPEPIAATKIDSGTDVNFGALTRILFDHLKQLDVEINYGHGVEDLKRVDGGWEIKVKNERDNRIEHHTAKFVFIGGGGGSLPLLQKTGIPESKQIGGFPVSGLFLVCKNPEIAERHHAKVYGKAKVGAPPMSVPHLDTRYIDGQKSLLFGPFAGFSPKFLKTGSNLDLITSVKPNNVLTMLAAGAKEMGLTKYLIEQVLLSTEQRMNELREFIPNAKTEDWDVVVAGQRVQVIKDTPQGKGALQFGTEVVSAADGSVAALLGASPGASTAVPVMLEVLAKCFPDQLPSWEAKIKEMIPSYGTSLVANPELFDQIHAETTKTLELTEAQPIR.

This sequence belongs to the MQO family. The cofactor is FAD.

The enzyme catalyses (S)-malate + a quinone = a quinol + oxaloacetate. It participates in carbohydrate metabolism; tricarboxylic acid cycle; oxaloacetate from (S)-malate (quinone route): step 1/1. This Exiguobacterium sibiricum (strain DSM 17290 / CCUG 55495 / CIP 109462 / JCM 13490 / 255-15) protein is Probable malate:quinone oxidoreductase.